We begin with the raw amino-acid sequence, 540 residues long: Chaperonin GroEL 2 (540 aa).

Residues 30–33, lysine 51, 87–91, glycine 415, 479–481, and aspartate 495 each bind ATP; these read TLGP, DGTTT, and NAA.

It belongs to the chaperonin (HSP60) family. Forms a cylinder of 14 subunits composed of two heptameric rings stacked back-to-back. Interacts with the co-chaperonin GroES.

Its subcellular location is the cytoplasm. It catalyses the reaction ATP + H2O + a folded polypeptide = ADP + phosphate + an unfolded polypeptide.. Together with its co-chaperonin GroES, plays an essential role in assisting protein folding. The GroEL-GroES system forms a nano-cage that allows encapsulation of the non-native substrate proteins and provides a physical environment optimized to promote and accelerate protein folding. This Burkholderia vietnamiensis (strain G4 / LMG 22486) (Burkholderia cepacia (strain R1808)) protein is Chaperonin GroEL 2.